A 147-amino-acid chain; its full sequence is MSKHTRVTSSETAINQHRSLNVEGFKVVSARLRSAEYETFSYQARLLGLSDSMAIRVAVRRIGGFLEIDAHTREKMEAILQSIGILSSNVSMLLSAYAEDPRSDLEAVRDERIAFGEAFAALDGLLRSILSVSRRRIDGCSLLKGAL.

Functionally, tumor formation by A.tumefaciens involves the transfer and integration of a defined segment (T-DNA) of Ti plasmid DNA into the plant nuclear genome. The virD operon encodes a site-specific endonuclease that cleaves at a unique site within both 24 bp direct repeats flanking the T-DNA. The protein is T-DNA border endonuclease VirD1 (virD1) of Rhizobium radiobacter (Agrobacterium tumefaciens).